Consider the following 483-residue polypeptide: PAT complex subunit CCDC47 (483 aa).

Positions 1–20 (MKAFYAFCVVLLVFGSVSEA) are cleaved as a signal peptide. The Cytoplasmic portion of the chain corresponds to 21-135 (KFDDFEDEED…PAHLQNSWES (115 aa)). The interval 46-119 (MEDSVTESPQ…DTSSNKNKDP (74 aa)) is disordered. A compositionally biased stretch (acidic residues) spans 60 to 104 (TEDDEDEATVELEGQDESQEGDFEDADTQEGDTESEPYDDEEFEG). Residues 105-118 (YEDKPDTSSNKNKD) are compositionally biased toward basic and acidic residues. The chain crosses the membrane as a helical span at residues 136–156 (YYLEILMVTGLLAYIMNYIIG). At 157-483 (KNKNSRLAQA…KMKQIKVKAM (327 aa)) the chain is on the lumenal side. Asn178 carries N-linked (GlcNAc...) asparagine glycosylation. The disordered stretch occupies residues 424–483 (QRQEAAQSRREEKKRAEKERIMNEEDPEKQRRLEEAALRREQKKLEKKQMKMKQIKVKAM). Positions 430 to 472 (QSRREEKKRAEKERIMNEEDPEKQRRLEEAALRREQKKLEKKQ) are enriched in basic and acidic residues. Residues 450-483 (PEKQRRLEEAALRREQKKLEKKQMKMKQIKVKAM) are a coiled coil. Over residues 473-483 (MKMKQIKVKAM) the composition is skewed to basic residues.

The protein belongs to the CCDC47 family. Component of the PAT complex, composed of WDR83OS/Asterix and CCDC47. The PAT complex is part of the multi-pass translocon (MPT) complex, composed of three subcomplexes, the GEL complex (composed of RAB5IF/OPTI and TMCO1), the BOS complex (composed of NCLN/Nicalin, NOMO1 and TMEM147) and the PAT complex (composed of WDR83OS/Asterix and CCDC47). The MPT complex associates with the SEC61 complex. Interacts with VCP, HSPA5, DERL1, DERL2 and SELENOS. In terms of tissue distribution, in the embryo, expressed in the endodermal layer of the yolk sac and in the small intestine.

The protein localises to the endoplasmic reticulum membrane. It localises to the rough endoplasmic reticulum membrane. In terms of biological role, component of the multi-pass translocon (MPT) complex that mediates insertion of multi-pass membrane proteins into the lipid bilayer of membranes. The MPT complex takes over after the SEC61 complex: following membrane insertion of the first few transmembrane segments of proteins by the SEC61 complex, the MPT complex occludes the lateral gate of the SEC61 complex to promote insertion of subsequent transmembrane regions. Within the MPT complex, the PAT subcomplex sequesters any highly polar regions in the transmembrane domains away from the non-polar membrane environment until they can be buried in the interior of the fully assembled protein. Within the PAT subcomplex, CCDC47 occludes the lateral gate of the SEC61 complex. Involved in the regulation of calcium ion homeostasis in the ER. Required for proper protein degradation via the ERAD (ER-associated degradation) pathway. Has an essential role in the maintenance of ER organization during embryogenesis. This is PAT complex subunit CCDC47 from Mus musculus (Mouse).